A 264-amino-acid polypeptide reads, in one-letter code: V-type proton ATPase subunit D (264 aa).

The segment covering 214–230 has biased composition (basic and acidic residues); it reads RDNAETDAQMKAKKAEQ. Residues 214-264 form a disordered region; the sequence is RDNAETDAQMKAKKAEQQRLALADSENAEGEQTENTPADILAAEEDEDVIF. Residues 255–264 are compositionally biased toward acidic residues; it reads AAEEDEDVIF.

This sequence belongs to the V-ATPase D subunit family. As to quaternary structure, V-ATPase is a heteromultimeric enzyme composed of a peripheral catalytic V1 complex (components A to H) attached to an integral membrane V0 proton pore complex (components: a, c, c', c'', d, e, f and VOA1).

The protein localises to the vacuole membrane. Functionally, subunit of the V1 complex of vacuolar(H+)-ATPase (V-ATPase), a multisubunit enzyme composed of a peripheral complex (V1) that hydrolyzes ATP and a membrane integral complex (V0) that translocates protons. V-ATPase is responsible for acidifying and maintaining the pH of intracellular compartments. The chain is V-type proton ATPase subunit D (vma-8) from Neurospora crassa (strain ATCC 24698 / 74-OR23-1A / CBS 708.71 / DSM 1257 / FGSC 987).